The sequence spans 751 residues: Catalase-peroxidase (751 aa).

The N-terminal stretch at 1–12 is a signal peptide; it reads MSNETKCPFSHA. The tryptophyl-tyrosyl-methioninium (Trp-Tyr) (with M-267) cross-link spans 91 to 241; that stretch reads WHSAGTYRIG…LAAVQMGLIY (151 aa). Histidine 92 functions as the Proton acceptor in the catalytic mechanism. Positions 241–267 form a cross-link, tryptophyl-tyrosyl-methioninium (Tyr-Met) (with W-91); the sequence is YVNPEGPDGNPDPLAAAHDIRESFGRM. Position 282 (histidine 282) interacts with heme b.

The protein belongs to the peroxidase family. Peroxidase/catalase subfamily. As to quaternary structure, homodimer or homotetramer. Heme b is required as a cofactor. Formation of the three residue Trp-Tyr-Met cross-link is important for the catalase, but not the peroxidase activity of the enzyme.

The catalysed reaction is H2O2 + AH2 = A + 2 H2O. The enzyme catalyses 2 H2O2 = O2 + 2 H2O. Its function is as follows. Bifunctional enzyme with both catalase and broad-spectrum peroxidase activity. The polypeptide is Catalase-peroxidase (Cupriavidus necator (strain ATCC 17699 / DSM 428 / KCTC 22496 / NCIMB 10442 / H16 / Stanier 337) (Ralstonia eutropha)).